We begin with the raw amino-acid sequence, 145 residues long: Synaptojanin-2-binding protein (145 aa).

The Cytoplasmic portion of the chain corresponds to 1 to 117 (MNGRVDYLVT…GPQGEGEPSG (117 aa)). In terms of domain architecture, PDZ spans 13–100 (EINLTRGPSG…AVSLRVQHRL (88 aa)). The chain crosses the membrane as a helical; Anchor for type IV membrane protein span at residues 118–138 (IPIAMVLVPVFALTMVAAWAF). The Mitochondrial intermembrane portion of the chain corresponds to 139–145 (MRYRQRL).

In terms of assembly, binds (via the PDZ domain) to isoform 2A of SYNJ2 (via the unique motif in the C-terminus). Interacts (via C-terminus) with RALBP1. Interacts (via PDZ domain) with ACVR2A (via C-terminus) and ACVR2B (via C-terminus). Forms a ternary complex with ACVR2A and RALBP1. Interacts with MAPK12. Interacts with DLL1; enhances DLL1 protein stability, and promotes notch signaling in endothelial cells.

The protein resides in the mitochondrion outer membrane. It is found in the cytoplasm. The protein localises to the perinuclear region. Regulates endocytosis of activin type 2 receptor kinases through the Ral/RALBP1-dependent pathway and may be involved in suppression of activin-induced signal transduction. The polypeptide is Synaptojanin-2-binding protein (Bos taurus (Bovine)).